The chain runs to 540 residues: Glucose-6-phosphate isomerase (540 aa).

The Proton donor role is filled by Glu350. Active-site residues include His381 and Lys503.

This sequence belongs to the GPI family.

It is found in the cytoplasm. It carries out the reaction alpha-D-glucose 6-phosphate = beta-D-fructose 6-phosphate. The protein operates within carbohydrate biosynthesis; gluconeogenesis. Its pathway is carbohydrate degradation; glycolysis; D-glyceraldehyde 3-phosphate and glycerone phosphate from D-glucose: step 2/4. Functionally, catalyzes the reversible isomerization of glucose-6-phosphate to fructose-6-phosphate. This Paraburkholderia phytofirmans (strain DSM 17436 / LMG 22146 / PsJN) (Burkholderia phytofirmans) protein is Glucose-6-phosphate isomerase.